A 261-amino-acid polypeptide reads, in one-letter code: Triosephosphate isomerase (261 aa).

10–12 (NWK) provides a ligand contact to substrate. His-100 serves as the catalytic Electrophile. The Proton acceptor role is filled by Glu-172. Substrate-binding positions include Gly-178, Ser-218, and 239 to 240 (GG).

The protein belongs to the triosephosphate isomerase family. In terms of assembly, homodimer.

The protein localises to the cytoplasm. It carries out the reaction D-glyceraldehyde 3-phosphate = dihydroxyacetone phosphate. It functions in the pathway carbohydrate biosynthesis; gluconeogenesis. The protein operates within carbohydrate degradation; glycolysis; D-glyceraldehyde 3-phosphate from glycerone phosphate: step 1/1. Functionally, involved in the gluconeogenesis. Catalyzes stereospecifically the conversion of dihydroxyacetone phosphate (DHAP) to D-glyceraldehyde-3-phosphate (G3P). The chain is Triosephosphate isomerase from Rhodococcus jostii (strain RHA1).